The following is a 445-amino-acid chain: Adenine permease AdeP (445 aa).

Topologically, residues 1–28 (MSHQHTTQTSGQGMLERVFKLREHGTTA) are cytoplasmic. Residues 29–52 (RTEVIAGFTTFLTMVYIVFVNPQI) form a helical membrane-spanning segment. Over 53 to 62 (LGVAGMDTSA) the chain is Periplasmic. A helical membrane pass occupies residues 63-81 (VFVTTCLIAAFGSIMMGLF). Over 82 to 83 (AN) the chain is Cytoplasmic. A discontinuously helical membrane pass occupies residues 84 to 100 (LPVALAPAMGLNAFFAF). At 101 to 112 (VVVQAMGLPWQV) the chain is on the periplasmic side. The chain crosses the membrane as a helical span at residues 113–132 (GMGAIFWGAIGLLLLTIFRV). Topologically, residues 133-144 (RYWMIANIPVSL) are cytoplasmic. A helical membrane pass occupies residues 145–165 (RVGITSGIGLFIGMMGLKNAG). The Periplasmic segment spans residues 166 to 181 (VIVANPETLVSIGNLT). The chain crosses the membrane as a helical span at residues 182–199 (SHSVLLGILGFFIIAILA). Residues 200 to 203 (SRNI) are Cytoplasmic-facing. The helical transmembrane segment at 204–222 (HAAVLVSIVVTTLLGWMLG) threads the bilayer. The Periplasmic portion of the chain corresponds to 223 to 250 (DVHYNGIVSAPPSVMTVVGHVDLAGSFN). The helical transmembrane segment at 251 to 279 (LGLAGVIFSFMLVNLFDSSGTLIGVTDKA) threads the bilayer. Residues 280–292 (GLADEKGKFPRMK) lie on the Cytoplasmic side of the membrane. A helical membrane pass occupies residues 293-308 (QALYVDSISSVTGSFI). Residues 309–310 (GT) are Periplasmic-facing. The discontinuously helical transmembrane segment at 311 to 326 (SSVTAYIESSSGVSVG) threads the bilayer. Topologically, residues 327 to 330 (GRTG) are cytoplasmic. The chain crosses the membrane as a helical span at residues 331 to 345 (LTAVVVGLLFLLVIF). Topologically, residues 346-356 (LSPLAGMVPGY) are periplasmic. A helical membrane pass occupies residues 357-376 (AAAGALIYVGVLMTSSLARV). The Cytoplasmic segment spans residues 377-381 (NWQDL). An intramembrane region (discontinuously helical) is located at residues 382–417 (TESVPAFITAVMMPFSFSITEGIALGFISYCVMKIG). The Cytoplasmic segment spans residues 418 to 445 (TGRLRDLSPCVIIVALLFILKIVFIDAH).

It belongs to the nucleobase:cation symporter-2 (NCS2) (TC 2.A.40) family. Azg-like subfamily.

Its subcellular location is the cell inner membrane. With respect to regulation, internal adenine may inhibit transport. High-affinity transporter for adenine. The chain is Adenine permease AdeP (adeP) from Escherichia coli (strain K12).